Here is a 301-residue protein sequence, read N- to C-terminus: RNA polymerase II holoenzyme cyclin-like subunit (301 aa).

The 90-residue stretch at Gln-53–Ser-142 folds into the Cyclin N-terminal domain.

This sequence belongs to the cyclin family. Cyclin C subfamily. Component of the srb8-11 complex, a regulatory module of the Mediator complex.

It is found in the nucleus. Its function is as follows. Component of the srb8-11 complex. The srb8-11 complex is a regulatory module of the Mediator complex which is itself involved in regulation of basal and activated RNA polymerase II-dependent transcription. The srb8-11 complex may be involved in the transcriptional repression of a subset of genes regulated by Mediator. It may inhibit the association of the Mediator complex with RNA polymerase II to form the holoenzyme complex. The srb8-11 complex phosphorylates the C-terminal domain (CTD) of the largest subunit of RNA polymerase II. The chain is RNA polymerase II holoenzyme cyclin-like subunit (ssn8) from Aspergillus terreus (strain NIH 2624 / FGSC A1156).